The sequence spans 162 residues: Transcription elongation factor GreA (162 aa).

Positions 48-76 (NSEYQSAKDEQAFVEGRVKQLQQMIQFAQ) form a coiled coil. The interval 111–132 (GSAESDPLSGKISNDSPMGKAL) is disordered.

It belongs to the GreA/GreB family.

Its function is as follows. Necessary for efficient RNA polymerase transcription elongation past template-encoded arresting sites. The arresting sites in DNA have the property of trapping a certain fraction of elongating RNA polymerases that pass through, resulting in locked ternary complexes. Cleavage of the nascent transcript by cleavage factors such as GreA or GreB allows the resumption of elongation from the new 3'terminus. GreA releases sequences of 2 to 3 nucleotides. The protein is Transcription elongation factor GreA of Oenococcus oeni (strain ATCC BAA-331 / PSU-1).